A 292-amino-acid polypeptide reads, in one-letter code: E3 ubiquitin-protein ligase RNF144A (292 aa).

Residues 16–236 are TRIAD supradomain; sequence PLVSCKLCLG…YDKGPCRNKL (221 aa). Zn(2+) contacts are provided by Cys20, Cys23, Cys43, Cys46, Cys111, Cys116, Cys135, Cys138, Cys143, Cys146, His151, Cys156, Cys185, and Cys188. The RING-type 1 zinc finger occupies 20–70; it reads CKLCLGEYPVEQMTTIAQCQCIFCTLCLKQYVELLIKEGLETAISCPDAAC. The segment at 91–156 adopts an IBR-type zinc-finger fold; the sequence is QRYKKLQFER…KASWHPGQGC (66 aa). Residues 185 to 214 form an RING-type 2; atypical zinc finger; that stretch reads CPKCKVYIERDEGCAQMMCKNCKHAFCWYC. Residue Cys198 is part of the active site. 6 residues coordinate Zn(2+): Cys203, Cys206, Cys211, Cys214, His226, and Cys232. A helical transmembrane segment spans residues 250–270; it reads VVGIFAGFGLLLLVASPFLLL.

The protein belongs to the RBR family. RNF144 subfamily. In terms of assembly, self-associates. Interacts with UBE2L3. Post-translationally, auto-ubiquitinated.

The protein resides in the cell membrane. It is found in the cytoplasmic vesicle membrane. The protein localises to the endosome membrane. Its subcellular location is the endoplasmic reticulum membrane. It catalyses the reaction [E2 ubiquitin-conjugating enzyme]-S-ubiquitinyl-L-cysteine + [acceptor protein]-L-lysine = [E2 ubiquitin-conjugating enzyme]-L-cysteine + [acceptor protein]-N(6)-ubiquitinyl-L-lysine.. The protein operates within protein modification; protein ubiquitination. Functionally, E3 ubiquitin-protein ligase which accepts ubiquitin from E2 ubiquitin-conjugating enzymes UBE2L3 and UBE2L6 in the form of a thioester and then directly transfers the ubiquitin to targeted substrates. Mediates the ubiquitination and degradation of the DNA damage kinase PRKDC during DNA damage. Positively regulates DNA virus or exogenous cytosolic DNA-triggered innate immune response by mediating STING1 ubiquitination and increasing its 'Lys-6'-linked ubiquitination and translocation from the endoplasmic reticulum to the Golgi leading to downstream signaling pathways. Plays a positive role in EGF-dependent cell proliferation by prolonging EGF/EGFR signaling during EGF stimulation through EGFR ubiquitination. Increases ERK activity independently of EGFR signaling by promoting polyubiquitination and subsequent degradation of VRK3 in the cytosol. In Homo sapiens (Human), this protein is E3 ubiquitin-protein ligase RNF144A (RNF144A).